Consider the following 390-residue polypeptide: GTPase Obg (390 aa).

The Obg domain maps to 1–159 (MKFVDEASIL…RDLMLELMLL (159 aa)). Residues 127–147 (NTRFKSSVNRTPRQKTMGTPG) form a disordered region. Residues 129-143 (RFKSSVNRTPRQKTM) are compositionally biased toward polar residues. The OBG-type G domain maps to 160 to 333 (ADVGMLGMPN…LCWDVMTFII (174 aa)). Residues 166-173 (GMPNAGKS), 191-195 (FTTLV), 213-216 (DIPG), 283-286 (NKID), and 314-316 (SAA) contribute to the GTP site. Mg(2+)-binding residues include S173 and T193.

Belongs to the TRAFAC class OBG-HflX-like GTPase superfamily. OBG GTPase family. In terms of assembly, monomer. Mg(2+) is required as a cofactor.

It localises to the cytoplasm. An essential GTPase which binds GTP, GDP and possibly (p)ppGpp with moderate affinity, with high nucleotide exchange rates and a fairly low GTP hydrolysis rate. Plays a role in control of the cell cycle, stress response, ribosome biogenesis and in those bacteria that undergo differentiation, in morphogenesis control. In Citrobacter koseri (strain ATCC BAA-895 / CDC 4225-83 / SGSC4696), this protein is GTPase Obg.